Consider the following 98-residue polypeptide: Co-chaperonin GroES (98 aa).

This sequence belongs to the GroES chaperonin family. As to quaternary structure, heptamer of 7 subunits arranged in a ring. Interacts with the chaperonin GroEL.

It is found in the cytoplasm. Together with the chaperonin GroEL, plays an essential role in assisting protein folding. The GroEL-GroES system forms a nano-cage that allows encapsulation of the non-native substrate proteins and provides a physical environment optimized to promote and accelerate protein folding. GroES binds to the apical surface of the GroEL ring, thereby capping the opening of the GroEL channel. This chain is Co-chaperonin GroES, found in Micrococcus luteus (strain ATCC 4698 / DSM 20030 / JCM 1464 / CCM 169 / CCUG 5858 / IAM 1056 / NBRC 3333 / NCIMB 9278 / NCTC 2665 / VKM Ac-2230) (Micrococcus lysodeikticus).